A 166-amino-acid chain; its full sequence is NAD(P)H-quinone oxidoreductase subunit I, chloroplastic (166 aa).

2 4Fe-4S ferredoxin-type domains span residues 55–84 and 95–124; these read GRIHFEFDKCIACEVCVRVCPIDLPVVDWK and LNYSIDFGICIFCGNCVEYCPTNCLSMTEE. Positions 64, 67, 70, 74, 104, 107, 110, and 114 each coordinate [4Fe-4S] cluster.

Belongs to the complex I 23 kDa subunit family. In terms of assembly, NDH is composed of at least 16 different subunits, 5 of which are encoded in the nucleus. [4Fe-4S] cluster serves as cofactor.

It is found in the plastid. It localises to the chloroplast thylakoid membrane. The enzyme catalyses a plastoquinone + NADH + (n+1) H(+)(in) = a plastoquinol + NAD(+) + n H(+)(out). It carries out the reaction a plastoquinone + NADPH + (n+1) H(+)(in) = a plastoquinol + NADP(+) + n H(+)(out). NDH shuttles electrons from NAD(P)H:plastoquinone, via FMN and iron-sulfur (Fe-S) centers, to quinones in the photosynthetic chain and possibly in a chloroplast respiratory chain. The immediate electron acceptor for the enzyme in this species is believed to be plastoquinone. Couples the redox reaction to proton translocation, and thus conserves the redox energy in a proton gradient. The protein is NAD(P)H-quinone oxidoreductase subunit I, chloroplastic of Guardiola tulocarpus.